We begin with the raw amino-acid sequence, 571 residues long: Proline--tRNA ligase (571 aa).

It belongs to the class-II aminoacyl-tRNA synthetase family. ProS type 1 subfamily. In terms of assembly, homodimer.

It localises to the cytoplasm. It carries out the reaction tRNA(Pro) + L-proline + ATP = L-prolyl-tRNA(Pro) + AMP + diphosphate. In terms of biological role, catalyzes the attachment of proline to tRNA(Pro) in a two-step reaction: proline is first activated by ATP to form Pro-AMP and then transferred to the acceptor end of tRNA(Pro). As ProRS can inadvertently accommodate and process non-cognate amino acids such as alanine and cysteine, to avoid such errors it has two additional distinct editing activities against alanine. One activity is designated as 'pretransfer' editing and involves the tRNA(Pro)-independent hydrolysis of activated Ala-AMP. The other activity is designated 'posttransfer' editing and involves deacylation of mischarged Ala-tRNA(Pro). The misacylated Cys-tRNA(Pro) is not edited by ProRS. The chain is Proline--tRNA ligase from Vibrio atlanticus (strain LGP32) (Vibrio splendidus (strain Mel32)).